Reading from the N-terminus, the 146-residue chain is Myoglobin (146 aa).

Residues 2 to 140 (ADLDAVLKCW…VIADLEANYK (139 aa)) enclose the Globin domain. Residue H59 coordinates nitrite. H59 contacts O2. H88 is a heme b binding site.

It belongs to the globin family. As to quaternary structure, monomeric.

It localises to the cytoplasm. The protein resides in the sarcoplasm. It catalyses the reaction Fe(III)-heme b-[protein] + nitric oxide + H2O = Fe(II)-heme b-[protein] + nitrite + 2 H(+). It carries out the reaction H2O2 + AH2 = A + 2 H2O. In terms of biological role, monomeric heme protein which primary function is to store oxygen and facilitate its diffusion within muscle tissues. Reversibly binds oxygen through a pentacoordinated heme iron and enables its timely and efficient release as needed during periods of heightened demand. Depending on the oxidative conditions of tissues and cells, and in addition to its ability to bind oxygen, it also has a nitrite reductase activity whereby it regulates the production of bioactive nitric oxide. Under stress conditions, like hypoxia and anoxia, it also protects cells against reactive oxygen species thanks to its pseudoperoxidase activity. The protein is Myoglobin (mb) of Katsuwonus pelamis (Skipjack tuna).